We begin with the raw amino-acid sequence, 293 residues long: tRNA pseudouridine synthase B (293 aa).

Residue Asp-38 is the Nucleophile of the active site.

Belongs to the pseudouridine synthase TruB family. Type 1 subfamily.

It carries out the reaction uridine(55) in tRNA = pseudouridine(55) in tRNA. Responsible for synthesis of pseudouridine from uracil-55 in the psi GC loop of transfer RNAs. The sequence is that of tRNA pseudouridine synthase B from Microcystis aeruginosa (strain NIES-843 / IAM M-2473).